The primary structure comprises 214 residues: Cell division protein SepF (214 aa).

Residues 23–70 (YYDDRAPSRGFPRPRFDDGYGRYDGDDYDDPRREPADCPPPAGYRGGY) are disordered. Over residues 36–58 (PRFDDGYGRYDGDDYDDPRREPA) the composition is skewed to basic and acidic residues.

This sequence belongs to the SepF family. In terms of assembly, homodimer. Interacts with FtsZ.

Its subcellular location is the cytoplasm. In terms of biological role, cell division protein that is part of the divisome complex and is recruited early to the Z-ring. Probably stimulates Z-ring formation, perhaps through the cross-linking of FtsZ protofilaments. Its function overlaps with FtsA. The protein is Cell division protein SepF of Mycolicibacterium paratuberculosis (strain ATCC BAA-968 / K-10) (Mycobacterium paratuberculosis).